Reading from the N-terminus, the 321-residue chain is Thylakoid-associated protein sll1697 (321 aa).

Its subcellular location is the cellular thylakoid membrane. The protein is Thylakoid-associated protein sll1697 of Synechocystis sp. (strain ATCC 27184 / PCC 6803 / Kazusa).